A 258-amino-acid polypeptide reads, in one-letter code: Rho-related GTP-binding protein RhoU (258 aa).

Residues Met-1–Ala-45 form a disordered region. Residues Phe-10–Gly-27 show a composition bias toward basic and acidic residues. The segment covering Gly-29–Ala-45 has biased composition (gly residues). GTP is bound by residues Gly-56–Thr-63, Asp-103–Gln-107, and Thr-161–Asp-164. Residues Lys-177 and Lys-248 each participate in a glycyl lysine isopeptide (Lys-Gly) (interchain with G-Cter in ubiquitin) cross-link. Residue Cys-256 is the site of S-palmitoyl cysteine attachment.

This sequence belongs to the small GTPase superfamily. Rho family. As to quaternary structure, interacts with PAK1. Interacts with PAK3. Interacts with ARHGAP30 in a GTP-independent manner. In its GTP-loaded conformation, interacts with ARHGAP31. Interacts with PTK2B/PYK2. Interacts with PAK4; the interaction is PAK4 kinase activity-independent and protects RHOU from ubiquitination. It depends on Mg(2+) as a cofactor. Ubiquitinated. 'Lys-48'-linked ubiquitination at Lys-177 and Lys-248 by the ECS(RAB40A) complex leading to its degradation. In terms of processing, tyrosine phosphorylated by SRC in response to PTK2B/PYK2 activation. As to expression, ubiquitously expressed in all tissues examined. Expressed at high levels in the stomach, small intestine, brain, skeletal muscle and placenta.

It is found in the cell membrane. Its subcellular location is the golgi apparatus membrane. The protein resides in the cell junction. It localises to the focal adhesion. The protein localises to the cell projection. It is found in the podosome. Its function is as follows. Binds to and activates protein kinase PAK1. Plays a role in the regulation of cell morphology, cytoskeletal organization and focal adhesion assembly during cell migration. Also stimulates quiescent cells to reenter the cell cycle. Has no detectable GTPase activity but its high intrinsic guanine nucleotide exchange activity suggests it is constitutively GTP-bound. This is Rho-related GTP-binding protein RhoU from Homo sapiens (Human).